The sequence spans 189 residues: NADH-ubiquinone oxidoreductase 20.9 kDa subunit (189 aa).

Residues 73 to 88 (AMRLATAVGFFGGFLY) traverse the membrane as a helical segment.

In terms of assembly, complex I is composed of about 40 different subunits. Post-translationally, the N-terminus is blocked.

Its subcellular location is the mitochondrion inner membrane. The catalysed reaction is a ubiquinone + NADH + 5 H(+)(in) = a ubiquinol + NAD(+) + 4 H(+)(out). Transfer of electrons from NADH to the respiratory chain. The immediate electron acceptor for the enzyme is believed to be ubiquinone. The sequence is that of NADH-ubiquinone oxidoreductase 20.9 kDa subunit (nuo20.9) from Neurospora crassa (strain ATCC 24698 / 74-OR23-1A / CBS 708.71 / DSM 1257 / FGSC 987).